The following is a 30-amino-acid chain: U1-poneritoxin-Ni3b (30 aa).

It belongs to the ponericin-G family. As to expression, expressed by the venom gland.

It is found in the secreted. Its function is as follows. Shows a broad spectrum of activity against both Gram-positive and Gram-negative bacteria. Also has antimicrobial activity against S.cerevisiae. Has insecticidal and non-hemolytic activity. This is U1-poneritoxin-Ni3b from Neoponera inversa (Ant).